We begin with the raw amino-acid sequence, 1464 residues long: Collagen alpha-1(III) chain (1464 aa).

Positions 1 to 23 are cleaved as a signal peptide; the sequence is MMSFVQSGTWFLLTLLHPTLILA. The propeptide at 24 to 154 is N-terminal propeptide; the sequence is QQSNVDELGC…CPTGGQNYSP (131 aa). One can recognise a VWFC domain in the interval 31-90; it reads LGCSHLGQSYESRDVWKPEPCQICVCDSGSVLCDDIICDEEPLDCPNPEIPFGECCAICP. The disordered stretch occupies residues 97–1195; that stretch reads PVLPDGHGPQ…PGPPGAPGPC (1099 aa). The segment covering 100–109 has biased composition (low complexity); the sequence is PDGHGPQGPK. Positions 147-156 are enriched in polar residues; that stretch reads TGGQNYSPQF. The interval 155–169 is nonhelical region (N-terminal); the sequence is QFDSYDVKSGVGGMG. Gly residues predominate over residues 164-173; sequence GVGGMGGYPG. Residues 170-1195 form a triple-helical region region; sequence GYPGPAGPPG…PGPPGAPGPC (1026 aa). A compositionally biased stretch (pro residues) spans 174–184; that stretch reads PAGPPGPPGPP. Over residues 186 to 198 the composition is skewed to low complexity; the sequence is SSGHPGSPGSPGY. The span at 228-240 shows a compositional bias: basic and acidic residues; sequence KDGESGRPGRPGE. K262 carries the 5-hydroxylysine; alternate modification. K262 carries O-linked (Gal...) hydroxylysine; alternate glycosylation. Basic and acidic residues predominate over residues 265–276; that stretch reads RGFDGRNGEKGE. At K283 the chain carries 5-hydroxylysine. 2 stretches are compositionally biased toward low complexity: residues 310 to 321 and 354 to 379; these read PGLPGAAGARGN and PAGS…AGAQ. A compositionally biased stretch (gly residues) spans 389–398; it reads GSPGGKGEMG. Residues 399 to 412 show a composition bias toward low complexity; sequence PAGIPGAPGLIGAR. Residues 527–548 show a composition bias toward gly residues; it reads GTPGGPGIRGMPGSPGGPGNDG. Residues 606 to 615 are compositionally biased toward low complexity; it reads PAGKNGETGP. Composition is skewed to gly residues over residues 641 to 650 and 668 to 677; these read GIPGTGGPPG and GAPGGKGDSG. Residues 678 to 691 are compositionally biased toward low complexity; sequence APGERGPPGTAGIP. The segment covering 692 to 708 has biased composition (gly residues); the sequence is GARGGAGPPGPEGGKGP. Low complexity predominate over residues 717–727; that stretch reads ASGSPGLQGMP. Positions 822–834 are enriched in basic and acidic residues; sequence AKGERGAPGEKGE. 5-hydroxylysine is present on K859. Residues 863 to 879 show a composition bias toward gly residues; sequence GSPGGPGTAGFPGGRGL. A compositionally biased stretch (pro residues) spans 889–906; it reads PGPPGPSGAPGKDGPPGP. Composition is skewed to low complexity over residues 907-934 and 945-960; these read AGNS…KGPP and PLGI…LAGP. K976 carries the 5-hydroxylysine modification. Pro residues predominate over residues 1045–1054; it reads PGHPGPPGPV. Positions 1068-1084 are enriched in low complexity; that stretch reads PAGPSGAPGPAGARGAP. 5-hydroxylysine is present on residues K1093 and K1105. Over residues 1120–1132 the composition is skewed to low complexity; sequence PGAAGHQGAIGSP. A compositionally biased stretch (pro residues) spans 1180–1192; the sequence is PGQPGPPGPPGAP. Residues 1220–1464 constitute a propeptide, C-terminal propeptide; it reads DDPMDFKINT…GVDIGPVCFL (245 aa). The region spanning 1230–1464 is the Fibrillar collagen NC1 domain; it reads EEIMSSLKSV…GVDIGPVCFL (235 aa). Disulfide bonds link C1260-C1292, C1300-C1462, and C1370-C1415. The Ca(2+) site is built by D1278, N1280, Q1281, C1283, and D1286.

This sequence belongs to the fibrillar collagen family. In terms of assembly, trimers of identical alpha 1(III) chains. The chains are linked to each other by interchain disulfide bonds. Trimers are also cross-linked via hydroxylysines. Interacts with ADGRG1. Proline residues at the third position of the tripeptide repeating unit (G-X-Y) are hydroxylated in some or all of the chains. Post-translationally, O-linked glycan consists of a Glc-Gal disaccharide bound to the oxygen atom of a post-translationally added hydroxyl group. In terms of tissue distribution, expressed in embryonic brain, specifically in the meninges, pial basement membrane and blood vessels (at protein level).

The protein localises to the secreted. Its subcellular location is the extracellular space. It is found in the extracellular matrix. Functionally, collagen type III occurs in most soft connective tissues along with type I collagen. Involved in regulation of cortical development. Is the major ligand of ADGRG1 in the developing brain and binding to ADGRG1 inhibits neuronal migration and activates the RhoA pathway by coupling ADGRG1 to GNA13 and possibly GNA12. This is Collagen alpha-1(III) chain (Col3a1) from Mus musculus (Mouse).